The following is a 394-amino-acid chain: 1-deoxy-D-xylulose 5-phosphate reductoisomerase (394 aa).

Residues threonine 12, glycine 13, serine 14, isoleucine 15, glycine 38, asparagine 41, and asparagine 132 each contribute to the NADPH site. A 1-deoxy-D-xylulose 5-phosphate-binding site is contributed by lysine 133. Glutamate 134 contacts NADPH. Aspartate 156 is a Mn(2+) binding site. 1-deoxy-D-xylulose 5-phosphate is bound by residues serine 157, glutamate 158, serine 182, and histidine 205. Glutamate 158 provides a ligand contact to Mn(2+). Residue glycine 211 coordinates NADPH. 1-deoxy-D-xylulose 5-phosphate is bound by residues serine 218, asparagine 223, lysine 224, and glutamate 227. Glutamate 227 contacts Mn(2+).

This sequence belongs to the DXR family. The cofactor is Mg(2+). Mn(2+) is required as a cofactor.

The catalysed reaction is 2-C-methyl-D-erythritol 4-phosphate + NADP(+) = 1-deoxy-D-xylulose 5-phosphate + NADPH + H(+). It participates in isoprenoid biosynthesis; isopentenyl diphosphate biosynthesis via DXP pathway; isopentenyl diphosphate from 1-deoxy-D-xylulose 5-phosphate: step 1/6. Functionally, catalyzes the NADPH-dependent rearrangement and reduction of 1-deoxy-D-xylulose-5-phosphate (DXP) to 2-C-methyl-D-erythritol 4-phosphate (MEP). This Pseudarthrobacter chlorophenolicus (strain ATCC 700700 / DSM 12829 / CIP 107037 / JCM 12360 / KCTC 9906 / NCIMB 13794 / A6) (Arthrobacter chlorophenolicus) protein is 1-deoxy-D-xylulose 5-phosphate reductoisomerase.